A 310-amino-acid chain; its full sequence is Malate dehydrogenase (310 aa).

NAD(+) contacts are provided by residues 7 to 13 and aspartate 34; that span reads GAAGGIG. Positions 81 and 87 each coordinate substrate. Residues asparagine 94 and 117 to 119 each bind NAD(+); that span reads ITN. Residues asparagine 119 and arginine 153 each contribute to the substrate site. Histidine 177 acts as the Proton acceptor in catalysis. Methionine 227 serves as a coordination point for NAD(+).

The protein belongs to the LDH/MDH superfamily. MDH type 1 family. In terms of assembly, homodimer.

The catalysed reaction is (S)-malate + NAD(+) = oxaloacetate + NADH + H(+). In terms of biological role, catalyzes the reversible oxidation of malate to oxaloacetate. The sequence is that of Malate dehydrogenase from Idiomarina loihiensis (strain ATCC BAA-735 / DSM 15497 / L2-TR).